A 521-amino-acid polypeptide reads, in one-letter code: Occludin (521 aa).

Residues 1-66 (MSSRPFESPP…KWTSPPGVIR (66 aa)) are Cytoplasmic-facing. In terms of domain architecture, MARVEL spans 60–268 (SPPGVIRILS…IIFFAVKTRR (209 aa)). A helical membrane pass occupies residues 67–89 (ILSMLVIVMCIAIFGCVASTLAW). The Extracellular portion of the chain corresponds to 90 to 134 (DRGYGTGLMGGSIGYPYGSGFGSYGTGYGYGFGYGYGYGGYTDPR). The chain crosses the membrane as a helical span at residues 135-159 (AAKGFLLAMVAFCFIAALVIFVTSV). Over 160–169 (IRSDISRTRR) the chain is Cytoplasmic. The helical transmembrane segment at 170–194 (YYLTVIILSAFLGVMMFIATIVYIM) threads the bilayer. Over 195–242 (GVNPTAQASGSLYSSQIYAMCNQFYASTATGLYMDQYLYHYCVVDPQE) the chain is Extracellular. A disulfide bridge links C215 with C236. Residues 243–264 (AIAIVLGFMVIVAFALIIFFAV) form a helical membrane-spanning segment. Topologically, residues 265 to 521 (KTRRKMDRYD…MVGDYDRQKT (257 aa)) are cytoplasmic. Residue S301 is modified to Phosphoserine. Positions 301-407 (SAGTQDMPPP…ETDYTTGGES (107 aa)) are disordered. T304 is subject to Phosphothreonine. Phosphoserine occurs at positions 312, 320, and 339. Y367 bears the Phosphotyrosine mark. Residues S368 and S369 each carry the phosphoserine modification. Positions 380-389 (APSKGRTGRP) are enriched in basic residues. Positions 390-399 (KRLEQDHYET) are enriched in basic and acidic residues. Phosphotyrosine occurs at positions 397 and 401. Phosphothreonine; by PKC/PRKCH is present on residues T402 and T403. At S407 the chain carries Phosphoserine. The OCEL domain occupies 413–521 (EDWIREYPPI…MVGDYDRQKT (109 aa)). Residues 424 to 488 (SDQQRQLYKR…EYNRLKQVKG (65 aa)) adopt a coiled-coil conformation. S489 carries the phosphoserine modification.

The protein belongs to the ELL/occludin family. Interacts with TJP1/ZO1. Interacts with VAPA. Interacts with CLDN1, CLDN6, CLDN9, CLDN11, CLDN12 and CLDN17. Interacts with PLSCR1. Interacts with LSR, ILDR1 and ILDR2. Interacts with TJP2/ZO2. Post-translationally, dephosphorylated by PTPRJ. Less-phosphorylated forms are found in basolateral membrane, cytosol and tight junction. More-heavily phosphorylated forms are concentrated exclusively in tight junction. As to expression, localized at tight junctions of both epithelial and endothelial cells.

It is found in the cell membrane. The protein localises to the cell junction. It localises to the tight junction. Its function is as follows. May play a role in the formation and regulation of the tight junction (TJ) paracellular permeability barrier. Interacts with ZO-1. This Canis lupus familiaris (Dog) protein is Occludin (OCLN).